The primary structure comprises 355 residues: Na(+)/H(+) exchange regulatory cofactor NHE-RF1 (355 aa).

Serine 2 is modified (N-acetylserine). Residues serine 2 and serine 46 each carry the phosphoserine modification. In terms of domain architecture, PDZ 1 spans 14-94; the sequence is LCCLEKGPNG…AVRLLVVDPE (81 aa). 2 stretches are compositionally biased toward basic and acidic residues: residues 110-119 and 127-146; these read LLRPQEKSEQ and DTHE…RELR. Positions 110–146 are disordered; sequence LLRPQEKSEQAEPPAAADTHEAGDQNEAEKSHLRELR. Residues 149–229 form the PDZ 2 domain; it reads LCTMKKGPNG…EAKLLVVDKE (81 aa). Residues 244–355 form a disordered region; it reads EHLDGPLPEP…SKKNELFSNL (112 aa). Positions 259–268 are enriched in basic and acidic residues; the sequence is IQKESSREAL. Serine 264, serine 275, serine 285, and serine 286 each carry phosphoserine. A compositionally biased stretch (low complexity) spans 270-286; sequence EPASESPRPALARSASS. Threonine 288 carries the post-translational modification Phosphothreonine. Serine 289, serine 294, and serine 297 each carry phosphoserine. The span at 303–323 shows a compositional bias: low complexity; sequence STEPSSTSSSSSDPILDLNIS. Residues 345 to 355 are compositionally biased toward basic and acidic residues; the sequence is WSKKNELFSNL.

As to quaternary structure, homodimer, and heterodimer with NHERF2. Binds the N-termini of EZR, RDX and MSN. Binds the C-termini of PDGFRA, PDGFRB, ADRB2 and NOS2. Binds ARHGAP17, EPI64, RACK1, OPRK1, GNAQ, CTNNB1, PLCB3 and CLCN3. Forms a complex with CFTR and SLC4A7. Forms a complex with SLC4A7 and ATP6V1B1. Binds PDZK1. Binds the C-terminus of PAG1. In resting T-cells, part of a PAG1-NHERF1-MSN complex which is disrupted upon TCR activation. Directly interacts with HTR4. Interacts with MCC. Interacts with TRPC4 (via the PDZ-binding domain). Interacts (via the PDZ 1 domain) with PODXL (via the C-terminal PDZ-binding motif DTHL); interaction is not detected in glomerular epithelium cells. Interacts (via the PDZ 1 domain) with PODXL (via the C-terminal PDZ-binding motif DTHL); the interaction take place early in the secretory pathway and is necessary for its apical membrane sorting. Interacts with SLC34A1. Interacts with CFTR, SLC26A3 and SLC26A6. Interacts (via PDZ domains) with ACE2 (via PDZ-binding motif); the interaction may enhance ACE2 membrane residence. In terms of tissue distribution, expressed in spermatogenic cells.

The protein localises to the cytoplasm. It localises to the apical cell membrane. It is found in the cell projection. The protein resides in the filopodium. Its subcellular location is the ruffle. The protein localises to the microvillus. It localises to the endomembrane system. Its function is as follows. Scaffold protein that connects plasma membrane proteins with members of the ezrin/moesin/radixin family and thereby helps to link them to the actin cytoskeleton and to regulate their surface expression. Necessary for recycling of internalized ADRB2. Was first known to play a role in the regulation of the activity and subcellular location of SLC9A3. Necessary for cAMP-mediated phosphorylation and inhibition of SLC9A3. May enhance Wnt signaling. May participate in HTR4 targeting to microvilli. Involved in the regulation of phosphate reabsorption in the renal proximal tubules. Involved in sperm capacitation. May participate in the regulation of the chloride and bicarbonate homeostasis in spermatozoa. The polypeptide is Na(+)/H(+) exchange regulatory cofactor NHE-RF1 (Nherf1) (Mus musculus (Mouse)).